Consider the following 165-residue polypeptide: Alanine- and arginine-rich domain-containing protein (165 aa).

Residues 136–165 (QQLKKRQDQERASKPQSPQDEEMNPECGNA) form a disordered region.

The sequence is that of Alanine- and arginine-rich domain-containing protein (Aard) from Rattus norvegicus (Rat).